The chain runs to 87 residues: Tan_10cys (87 aa).

Positions methionine 1–aspartate 21 are cleaved as a signal peptide. The propeptide occupies arginine 22–arginine 27.

Belongs to the teretoxin C (TC) superfamily. Post-translationally, contains 5 disulfide bonds. Expressed by the venom duct.

It is found in the secreted. In Terebra anilis (Auger snail), this protein is Tan_10cys.